The chain runs to 337 residues: Holliday junction branch migration complex subunit RuvB (337 aa).

Residues 4–185 are large ATPase domain (RuvB-L); the sequence is ADRLISNSFE…FGITQRLEYY (182 aa). ATP-binding positions include isoleucine 24, arginine 25, glycine 66, lysine 69, threonine 70, threonine 71, 132-134, arginine 175, tyrosine 185, and arginine 222; that span reads EDY. Threonine 70 contributes to the Mg(2+) binding site. The small ATPAse domain (RuvB-S) stretch occupies residues 186–256; that stretch reads KVDDLKDIVQ…TAKKALDMLD (71 aa). The head domain (RuvB-H) stretch occupies residues 259–337; the sequence is SSGFDYMDRK…HFGLDIPEAR (79 aa). DNA contacts are provided by arginine 314 and arginine 319.

This sequence belongs to the RuvB family. As to quaternary structure, homohexamer. Forms an RuvA(8)-RuvB(12)-Holliday junction (HJ) complex. HJ DNA is sandwiched between 2 RuvA tetramers; dsDNA enters through RuvA and exits via RuvB. An RuvB hexamer assembles on each DNA strand where it exits the tetramer. Each RuvB hexamer is contacted by two RuvA subunits (via domain III) on 2 adjacent RuvB subunits; this complex drives branch migration. In the full resolvosome a probable DNA-RuvA(4)-RuvB(12)-RuvC(2) complex forms which resolves the HJ.

The protein localises to the cytoplasm. The catalysed reaction is ATP + H2O = ADP + phosphate + H(+). In terms of biological role, the RuvA-RuvB-RuvC complex processes Holliday junction (HJ) DNA during genetic recombination and DNA repair, while the RuvA-RuvB complex plays an important role in the rescue of blocked DNA replication forks via replication fork reversal (RFR). RuvA specifically binds to HJ cruciform DNA, conferring on it an open structure. The RuvB hexamer acts as an ATP-dependent pump, pulling dsDNA into and through the RuvAB complex. RuvB forms 2 homohexamers on either side of HJ DNA bound by 1 or 2 RuvA tetramers; 4 subunits per hexamer contact DNA at a time. Coordinated motions by a converter formed by DNA-disengaged RuvB subunits stimulates ATP hydrolysis and nucleotide exchange. Immobilization of the converter enables RuvB to convert the ATP-contained energy into a lever motion, pulling 2 nucleotides of DNA out of the RuvA tetramer per ATP hydrolyzed, thus driving DNA branch migration. The RuvB motors rotate together with the DNA substrate, which together with the progressing nucleotide cycle form the mechanistic basis for DNA recombination by continuous HJ branch migration. Branch migration allows RuvC to scan DNA until it finds its consensus sequence, where it cleaves and resolves cruciform DNA. The sequence is that of Holliday junction branch migration complex subunit RuvB from Photobacterium profundum (strain SS9).